The following is a 214-amino-acid chain: Anti-sigma-F factor NrsF (214 aa).

Residues 1-25 (MRTDDLIDALAADAGRGTEPAPPRR) are Cytoplasmic-facing. The chain crosses the membrane as a helical span at residues 26–46 (LALVAGLGGVAALLLVLGWLQ). Over 47–53 (ARPDLGQ) the chain is Periplasmic. A helical membrane pass occupies residues 54–74 (AILGPMFWVKAIYTGLLGLAG). At 75–90 (YLAVERLSRPGGSGRR) the chain is on the cytoplasmic side. A helical membrane pass occupies residues 91–111 (GWIIGAVVFGACAVAGIYQAI). The Periplasmic portion of the chain corresponds to 112–134 (TSPDVQAALKLLHGYSWRSCSPR). Residues 135 to 155 (ILVLGLPMLALGLWALRGMAP) form a helical membrane-spanning segment. Residues 156–158 (TRP) lie on the Cytoplasmic side of the membrane. Residues 159-179 (GLAGFAMGLFSGGVVATLYGL) form a helical membrane-spanning segment. The Periplasmic portion of the chain corresponds to 180-185 (HCPEHT). A helical transmembrane segment spans residues 186–206 (FTFLALWYSLGVLALGLIGGW). Residues 207–214 (AGRWLLRW) are Cytoplasmic-facing.

This sequence belongs to the NrsF anti-sigma-F factor family.

The protein resides in the cell inner membrane. Its function is as follows. An anti-sigma factor for extracytoplasmic function (ECF) sigma factor sigma-F (SigF), which responds to chromate and cadmium. Overexpression leads to loss of response to dichromate. ECF sigma factors are held in an inactive form by a cognate anti-sigma factor. This chain is Anti-sigma-F factor NrsF, found in Caulobacter vibrioides (strain NA1000 / CB15N) (Caulobacter crescentus).